The chain runs to 157 residues: Endoribonuclease YbeY (157 aa).

His-123, His-127, and His-133 together coordinate Zn(2+).

The protein belongs to the endoribonuclease YbeY family. The cofactor is Zn(2+).

The protein resides in the cytoplasm. Functionally, single strand-specific metallo-endoribonuclease involved in late-stage 70S ribosome quality control and in maturation of the 3' terminus of the 16S rRNA. The chain is Endoribonuclease YbeY from Desulfitobacterium hafniense (strain Y51).